Reading from the N-terminus, the 549-residue chain is MAAKDVIFGGEARARMVEGVNILANAVKVTLGPKGRNVVLERSFGAPTVTKDGVSVAKEIELKDKLQNMGAQMVKEVASKTSDIAGDGTTTATVLAQAIVHEGMKYVAAGMNPMDLKRGIDKAVHALVEELKKASKATTTSKEIAQVGSISANSDETIGKIIADAMDKVGKEGVITVEDGKSLESELDVVEGMQFDRGYLSPYFINNPEKQSALLDNPFVLLYDKKISNIRDLLPTLEQVAKAGRPLLIIAEEVEGEALATLVVNTLRGILKVVAVKAPGFGDRRKAMLEDIAVLTGGKVIAEEVGMSLEKVTLADLGQAKRIEVGKENTIIIDGSGEAADIEARVKQVRVQIEEATSDYDREKLQERVAKLAGGVAVIKVGAATEVEMKEKKARVEDALHATRAAVEEGIVAGGGVALLRAKQTAGVIKGDNADQDAGIKLVLRAIEAPLREIVYNAGGEASVVVNAVLAGTGNYGFNAANDTYGDMIEMGILDPTKVTRTALQNAASVASLMLTTECMVCESAKDDAPAGGMGGGMGGMGGMGDMGM.

ATP contacts are provided by residues 30–33 (TLGP), K51, 87–91 (DGTTT), G415, 479–481 (NAA), and D495.

It belongs to the chaperonin (HSP60) family. Forms a cylinder of 14 subunits composed of two heptameric rings stacked back-to-back. Interacts with the co-chaperonin GroES.

The protein localises to the cytoplasm. It carries out the reaction ATP + H2O + a folded polypeptide = ADP + phosphate + an unfolded polypeptide.. In terms of biological role, together with its co-chaperonin GroES, plays an essential role in assisting protein folding. The GroEL-GroES system forms a nano-cage that allows encapsulation of the non-native substrate proteins and provides a physical environment optimized to promote and accelerate protein folding. The sequence is that of Chaperonin GroEL 2 from Polaromonas naphthalenivorans (strain CJ2).